A 554-amino-acid polypeptide reads, in one-letter code: Glutamine--tRNA ligase (554 aa).

A 'HIGH' region motif is present at residues 34-44; the sequence is PEPNGYLHIGH. Residues 35-37 and 41-47 contribute to the ATP site; these read EPN and HIGHAKS. Residues Asp67 and Tyr212 each contribute to the L-glutamine site. ATP is bound by residues Thr231, 261 to 262, and 269 to 271; these read RL and MSK. Positions 268-272 match the 'KMSKS' region motif; sequence VMSKR.

This sequence belongs to the class-I aminoacyl-tRNA synthetase family. Monomer.

It localises to the cytoplasm. It catalyses the reaction tRNA(Gln) + L-glutamine + ATP = L-glutaminyl-tRNA(Gln) + AMP + diphosphate. In Shigella boydii serotype 4 (strain Sb227), this protein is Glutamine--tRNA ligase.